Consider the following 198-residue polypeptide: MSASAAILLAASESGHSDENVLIPPLSELLIGTLAFGLLVAFFFWKIRPQIARTYAQRTERIEGGIARAEAAQREAQALLEQYRAQLTEARAEAARIRDDAHTEGRQIVEELRASAQREIAEIKERADAQLAADRAQIVAQVRREVGVIAIDLASKIVGYQVESTATQARLVDDFIAALDNSAEGAGSSTPAPVGSGG.

Residues proline 25–tryptophan 45 form a helical membrane-spanning segment.

This sequence belongs to the ATPase B chain family. As to quaternary structure, F-type ATPases have 2 components, F(1) - the catalytic core - and F(0) - the membrane proton channel. F(1) has five subunits: alpha(3), beta(3), gamma(1), delta(1), epsilon(1). F(0) has three main subunits: a(1), b(2) and c(10-14). The alpha and beta chains form an alternating ring which encloses part of the gamma chain. F(1) is attached to F(0) by a central stalk formed by the gamma and epsilon chains, while a peripheral stalk is formed by the delta and b chains.

It localises to the cell membrane. Its function is as follows. F(1)F(0) ATP synthase produces ATP from ADP in the presence of a proton or sodium gradient. F-type ATPases consist of two structural domains, F(1) containing the extramembraneous catalytic core and F(0) containing the membrane proton channel, linked together by a central stalk and a peripheral stalk. During catalysis, ATP synthesis in the catalytic domain of F(1) is coupled via a rotary mechanism of the central stalk subunits to proton translocation. Functionally, component of the F(0) channel, it forms part of the peripheral stalk, linking F(1) to F(0). This is ATP synthase subunit b from Frankia alni (strain DSM 45986 / CECT 9034 / ACN14a).